Here is a 169-residue protein sequence, read N- to C-terminus: Crossover junction endodeoxyribonuclease RuvC (169 aa).

Active-site residues include D11, E71, and D143. Positions 11, 71, and 143 each coordinate Mg(2+).

This sequence belongs to the RuvC family. Homodimer which binds Holliday junction (HJ) DNA. The HJ becomes 2-fold symmetrical on binding to RuvC with unstacked arms; it has a different conformation from HJ DNA in complex with RuvA. In the full resolvosome a probable DNA-RuvA(4)-RuvB(12)-RuvC(2) complex forms which resolves the HJ. It depends on Mg(2+) as a cofactor.

It is found in the cytoplasm. It catalyses the reaction Endonucleolytic cleavage at a junction such as a reciprocal single-stranded crossover between two homologous DNA duplexes (Holliday junction).. The RuvA-RuvB-RuvC complex processes Holliday junction (HJ) DNA during genetic recombination and DNA repair. Endonuclease that resolves HJ intermediates. Cleaves cruciform DNA by making single-stranded nicks across the HJ at symmetrical positions within the homologous arms, yielding a 5'-phosphate and a 3'-hydroxyl group; requires a central core of homology in the junction. The consensus cleavage sequence is 5'-(A/T)TT(C/G)-3'. Cleavage occurs on the 3'-side of the TT dinucleotide at the point of strand exchange. HJ branch migration catalyzed by RuvA-RuvB allows RuvC to scan DNA until it finds its consensus sequence, where it cleaves and resolves the cruciform DNA. This Rhizobium etli (strain ATCC 51251 / DSM 11541 / JCM 21823 / NBRC 15573 / CFN 42) protein is Crossover junction endodeoxyribonuclease RuvC.